Reading from the N-terminus, the 425-residue chain is CBS domain-containing protein CBSX6 (425 aa).

The 75-residue stretch at 16–90 (GKPEMVEFYE…FLAKTECLQE (75 aa)) folds into the CBS 1 domain. Residues 159 to 172 (SENSSSSSGLSADS) are compositionally biased toward low complexity. Positions 159-182 (SENSSSSSGLSADSTNRPTTSMTS) are disordered. Residues 173–182 (TNRPTTSMTS) show a composition bias toward polar residues. 2 consecutive transmembrane segments (helical) span residues 200 to 220 (IGVL…LGII) and 275 to 295 (YLAA…MGVE). Residues 347–409 (MYRGRSAPLT…TAVTKQPSAF (63 aa)) form the CBS 2 domain.

It localises to the vacuole membrane. The polypeptide is CBS domain-containing protein CBSX6 (CBSX6) (Arabidopsis thaliana (Mouse-ear cress)).